The following is a 396-amino-acid chain: NADH-quinone oxidoreductase subunit D (396 aa).

The protein belongs to the complex I 49 kDa subunit family. NDH-1 is composed of 14 different subunits. Subunits NuoB, C, D, E, F, and G constitute the peripheral sector of the complex.

It localises to the cell inner membrane. The enzyme catalyses a quinone + NADH + 5 H(+)(in) = a quinol + NAD(+) + 4 H(+)(out). Its function is as follows. NDH-1 shuttles electrons from NADH, via FMN and iron-sulfur (Fe-S) centers, to quinones in the respiratory chain. The immediate electron acceptor for the enzyme in this species is believed to be ubiquinone. Couples the redox reaction to proton translocation (for every two electrons transferred, four hydrogen ions are translocated across the cytoplasmic membrane), and thus conserves the redox energy in a proton gradient. In Methylobacterium sp. (strain 4-46), this protein is NADH-quinone oxidoreductase subunit D.